A 165-amino-acid polypeptide reads, in one-letter code: Mating factor alpha-1 (165 aa).

A signal peptide (or 20) is located at residues 1–19 (MRFPSIFTAVLFAASSALA). 4 consecutive propeptides follow at residues 20-89 (APVN…EAEA), 105-110 (EAEAEA), 126-131 (EADAEA), and 147-152 (EADAEA).

Functionally, the active factor is excreted into the culture medium by haploid cells of the alpha mating type and acts on cells of the opposite mating type (type A). It mediates the conjugation process between the two types by inhibiting the initiation of DNA synthesis in type a cells and synchronizing them with type alpha. The protein is Mating factor alpha-1 (MF(ALPHA)1) of Saccharomyces cerevisiae (strain ATCC 204508 / S288c) (Baker's yeast).